The following is a 590-amino-acid chain: Multidrug resistance ABC transporter ATP-binding and permease protein (590 aa).

The next 6 membrane-spanning stretches (helical) occupy residues Tyr-35 to Val-55, Ile-79 to Phe-99, Ile-150 to Met-170, Leu-176 to Gly-196, Val-261 to Ile-281, and Leu-292 to Phe-312. Residues Phe-38–Lys-317 form the ABC transmembrane type-1 domain. The ABC transporter domain maps to Leu-349–Glu-584. Gly-382 to Ser-389 serves as a coordination point for ATP.

It belongs to the ABC transporter superfamily. Multidrug exporter LmrA (TC 3.A.1.117.1) family. Homodimer.

The protein localises to the cell membrane. It carries out the reaction ATP + H2O + xenobioticSide 1 = ADP + phosphate + xenobioticSide 2.. Functionally, efflux transporter for a variety of amphiphilic cationic compounds, including antibiotics. The polypeptide is Multidrug resistance ABC transporter ATP-binding and permease protein (lmrA) (Lactococcus lactis subsp. lactis (strain IL1403) (Streptococcus lactis)).